A 631-amino-acid polypeptide reads, in one-letter code: Phosphomethylpyrimidine synthase (631 aa).

Residues N239, M268, Y297, H333, 353 to 355 (SRG), 394 to 397 (DGLR), and E433 contribute to the substrate site. Zn(2+) is bound at residue H437. Position 460 (Y460) interacts with substrate. H501 serves as a coordination point for Zn(2+). [4Fe-4S] cluster contacts are provided by C581, C584, and C589.

The protein belongs to the ThiC family. Homodimer. [4Fe-4S] cluster serves as cofactor.

The enzyme catalyses 5-amino-1-(5-phospho-beta-D-ribosyl)imidazole + S-adenosyl-L-methionine = 4-amino-2-methyl-5-(phosphooxymethyl)pyrimidine + CO + 5'-deoxyadenosine + formate + L-methionine + 3 H(+). It participates in cofactor biosynthesis; thiamine diphosphate biosynthesis. In terms of biological role, catalyzes the synthesis of the hydroxymethylpyrimidine phosphate (HMP-P) moiety of thiamine from aminoimidazole ribotide (AIR) in a radical S-adenosyl-L-methionine (SAM)-dependent reaction. The chain is Phosphomethylpyrimidine synthase from Klebsiella pneumoniae (strain 342).